The sequence spans 306 residues: Homoserine O-acetyltransferase (306 aa).

C142 serves as the catalytic Acyl-thioester intermediate. The substrate site is built by K163 and S192. The active-site Proton acceptor is H235. E237 is a catalytic residue. Substrate is bound at residue R249.

It belongs to the MetA family.

Its subcellular location is the cytoplasm. The enzyme catalyses L-homoserine + acetyl-CoA = O-acetyl-L-homoserine + CoA. It participates in amino-acid biosynthesis; L-methionine biosynthesis via de novo pathway; O-acetyl-L-homoserine from L-homoserine: step 1/1. Transfers an acetyl group from acetyl-CoA to L-homoserine, forming acetyl-L-homoserine. The sequence is that of Homoserine O-acetyltransferase from Brevibacillus brevis (strain 47 / JCM 6285 / NBRC 100599).